The primary structure comprises 206 residues: Dephospho-CoA kinase (206 aa).

The DPCK domain occupies 4 to 204 (IVGLTGGIGS…QFYLQQAENK (201 aa)). Position 12–17 (12–17 (GSGKTT)) interacts with ATP.

It belongs to the CoaE family.

The protein localises to the cytoplasm. The enzyme catalyses 3'-dephospho-CoA + ATP = ADP + CoA + H(+). The protein operates within cofactor biosynthesis; coenzyme A biosynthesis; CoA from (R)-pantothenate: step 5/5. In terms of biological role, catalyzes the phosphorylation of the 3'-hydroxyl group of dephosphocoenzyme A to form coenzyme A. The chain is Dephospho-CoA kinase from Haemophilus influenzae (strain ATCC 51907 / DSM 11121 / KW20 / Rd).